Consider the following 367-residue polypeptide: uncharacterized protein (367 aa).

An ABC transporter domain is found at 4-234 (LTFEHVKKSY…PANLFVAGFI (231 aa)). An ATP-binding site is contributed by 36-43 (GPSGCGKS).

The protein belongs to the ABC transporter superfamily.

This is an uncharacterized protein from Bacillus subtilis (strain 168).